The following is a 301-amino-acid chain: Negative regulator of the PHO system (301 aa).

The 291-residue stretch at 7–297 (FKQLERLGNG…AQQALSHPLF (291 aa)) folds into the Protein kinase domain. ATP contacts are provided by residues 13–21 (LGNGTYATV) and Lys36. Asp133 functions as the Proton acceptor in the catalytic mechanism.

It belongs to the protein kinase superfamily. CMGC Ser/Thr protein kinase family. CDC2/CDKX subfamily. In terms of assembly, interacts with a number of cyclins.

The catalysed reaction is L-seryl-[protein] + ATP = O-phospho-L-seryl-[protein] + ADP + H(+). It catalyses the reaction L-threonyl-[protein] + ATP = O-phospho-L-threonyl-[protein] + ADP + H(+). When phosphate concentrations are high it phosphorylates the PHO4 transcription factor thus establishing repression. This Eremothecium gossypii (strain ATCC 10895 / CBS 109.51 / FGSC 9923 / NRRL Y-1056) (Yeast) protein is Negative regulator of the PHO system (PHO85).